The sequence spans 217 residues: tRNA (guanine-N(7)-)-methyltransferase (217 aa).

S-adenosyl-L-methionine is bound by residues Glu43, Asp68, Asn101, and Asn123. Lys127 lines the substrate pocket. The interaction with RNA stretch occupies residues Arg129 to Arg134. Residues Asp159 and Thr196–Glu199 each bind substrate.

It belongs to the class I-like SAM-binding methyltransferase superfamily. TrmB family.

It catalyses the reaction guanosine(46) in tRNA + S-adenosyl-L-methionine = N(7)-methylguanosine(46) in tRNA + S-adenosyl-L-homocysteine. It functions in the pathway tRNA modification; N(7)-methylguanine-tRNA biosynthesis. In terms of biological role, catalyzes the formation of N(7)-methylguanine at position 46 (m7G46) in tRNA. The protein is tRNA (guanine-N(7)-)-methyltransferase of Clostridium botulinum (strain Langeland / NCTC 10281 / Type F).